Reading from the N-terminus, the 62-residue chain is UPF0291 protein CLM_2971 (62 aa).

The protein belongs to the UPF0291 family.

The protein localises to the cytoplasm. In Clostridium botulinum (strain Kyoto / Type A2), this protein is UPF0291 protein CLM_2971.